A 153-amino-acid chain; its full sequence is Large ribosomal subunit protein bL9 (153 aa).

The protein belongs to the bacterial ribosomal protein bL9 family.

Its function is as follows. Binds to the 23S rRNA. The polypeptide is Large ribosomal subunit protein bL9 (Koribacter versatilis (strain Ellin345)).